The primary structure comprises 657 residues: Glycogen debranching enzyme (657 aa).

Aspartate 336 serves as the catalytic Nucleophile. Residue glutamate 371 is the Proton donor of the active site. Residues 460-479 (ANGEENRDGTNNNYSNNHGK) are disordered.

Belongs to the glycosyl hydrolase 13 family.

The catalysed reaction is Hydrolysis of (1-&gt;6)-alpha-D-glucosidic linkages to branches with degrees of polymerization of three or four glucose residues in limit dextrin.. It functions in the pathway glycan degradation; glycogen degradation. Functionally, removes maltotriose and maltotetraose chains that are attached by 1,6-alpha-linkage to the limit dextrin main chain, generating a debranched limit dextrin. In Escherichia coli O81 (strain ED1a), this protein is Glycogen debranching enzyme.